Here is a 465-residue protein sequence, read N- to C-terminus: Deoxyguanosinetriphosphate triphosphohydrolase-like protein (465 aa).

The disordered stretch occupies residues 1–22 (MKWDKLLNDKRRRESGVTRSKN). The HD domain maps to 63–252 (RLTHSMEVST…LEVADDIAYL (190 aa)).

Belongs to the dGTPase family. Type 3 subfamily.

The sequence is that of Deoxyguanosinetriphosphate triphosphohydrolase-like protein from Listeria innocua serovar 6a (strain ATCC BAA-680 / CLIP 11262).